We begin with the raw amino-acid sequence, 156 residues long: RNA polymerase sigma factor SigS (156 aa).

Residues 29-44 (EYYQLLLIKMWQLSQI) carry the Polymerase core binding motif. The H-T-H motif DNA-binding region spans 126–145 (QYEIADIMSLSTSTIKLIKA).

The protein belongs to the sigma-70 factor family.

Its function is as follows. Sigma factors are initiation factors that promote the attachment of RNA polymerase to specific initiation sites and are then released. Sigma-S contributes to the protection against external stress, thus playing a role in cellular fitness and survival. In Staphylococcus aureus (strain MRSA252), this protein is RNA polymerase sigma factor SigS (sigS).